Consider the following 251-residue polypeptide: Lactose phosphotransferase system repressor (251 aa).

An HTH deoR-type domain is found at 3-58; it reads KYDRLDEITKLVNKRGSVRTNEIVEDLNVSDMTVRRDLAELEEKGVLTKIHGGARS. The H-T-H motif DNA-binding region spans 20–39; it reads VRTNEIVEDLNVSDMTVRRD.

In terms of biological role, repressor of the lactose catabolism operon. Galactose-6-phosphate is the inducer. The polypeptide is Lactose phosphotransferase system repressor (lacR) (Staphylococcus epidermidis (strain ATCC 35984 / DSM 28319 / BCRC 17069 / CCUG 31568 / BM 3577 / RP62A)).